Here is a 209-residue protein sequence, read N- to C-terminus: Small ribosomal subunit protein uS4 (209 aa).

Zn(2+) is bound by residues C9, C12, C26, and C31. The C4-type zinc finger occupies 9–31 (CKLCRREGMKLYLKGERCYTDKC). Residues 98–161 (ARLDNVVYRM…RDLEVIKKAI (64 aa)) enclose the S4 RNA-binding domain.

This sequence belongs to the universal ribosomal protein uS4 family. Part of the 30S ribosomal subunit. Contacts protein S5. The interaction surface between S4 and S5 is involved in control of translational fidelity. Zn(2+) is required as a cofactor.

Functionally, one of the primary rRNA binding proteins, it binds directly to 16S rRNA where it nucleates assembly of the body of the 30S subunit. In terms of biological role, with S5 and S12 plays an important role in translational accuracy. In Thermotoga maritima (strain ATCC 43589 / DSM 3109 / JCM 10099 / NBRC 100826 / MSB8), this protein is Small ribosomal subunit protein uS4 (rpsD).